Reading from the N-terminus, the 366-residue chain is Chorismate synthase (366 aa).

NADP(+) is bound by residues Arg48 and Arg54. FMN-binding positions include 125–127 (RSS), 238–239 (NA), Gly278, 293–297 (KPTSS), and Arg319.

This sequence belongs to the chorismate synthase family. As to quaternary structure, homotetramer. Requires FMNH2 as cofactor.

The catalysed reaction is 5-O-(1-carboxyvinyl)-3-phosphoshikimate = chorismate + phosphate. It participates in metabolic intermediate biosynthesis; chorismate biosynthesis; chorismate from D-erythrose 4-phosphate and phosphoenolpyruvate: step 7/7. Its function is as follows. Catalyzes the anti-1,4-elimination of the C-3 phosphate and the C-6 proR hydrogen from 5-enolpyruvylshikimate-3-phosphate (EPSP) to yield chorismate, which is the branch point compound that serves as the starting substrate for the three terminal pathways of aromatic amino acid biosynthesis. This reaction introduces a second double bond into the aromatic ring system. This chain is Chorismate synthase, found in Herminiimonas arsenicoxydans.